The following is a 106-amino-acid chain: MTVKSQNRQTKKLAGERIAILFTQAKVFAGINPAWSDRCVERARAIAMRQRMRMEREQRRQYCHHCYAYFLHGVNVRVRVHRGHVIVTCLNCGRQTRYQVVRTDNR.

4 residues coordinate Zn(2+): cysteine 63, cysteine 66, cysteine 89, and cysteine 92.

It belongs to the eukaryotic/archaeal RNase P protein component 4 family. In terms of assembly, consists of a catalytic RNA component and at least 4-5 protein subunits. Zn(2+) serves as cofactor.

Its subcellular location is the cytoplasm. It carries out the reaction Endonucleolytic cleavage of RNA, removing 5'-extranucleotides from tRNA precursor.. In terms of biological role, part of ribonuclease P, a protein complex that generates mature tRNA molecules by cleaving their 5'-ends. This is Ribonuclease P protein component 4 from Methanosphaerula palustris (strain ATCC BAA-1556 / DSM 19958 / E1-9c).